Here is a 59-residue protein sequence, read N- to C-terminus: Large ribosomal subunit protein uL30 (59 aa).

The protein belongs to the universal ribosomal protein uL30 family. As to quaternary structure, part of the 50S ribosomal subunit.

The chain is Large ribosomal subunit protein uL30 from Solidesulfovibrio magneticus (strain ATCC 700980 / DSM 13731 / RS-1) (Desulfovibrio magneticus).